Consider the following 932-residue polypeptide: uncharacterized protein (932 aa).

Disordered regions lie at residues 26-120, 158-289, 304-617, 635-720, and 802-863; these read NINN…NMLT, MGIG…EEKK, NNNN…INHD, QQSQ…PPLV, and SVSS…FPLE. 2 stretches are compositionally biased toward low complexity: residues 41–105 and 163–241; these read NNNI…IISS and NNNN…YGNN. The span at 242-253 shows a compositional bias: polar residues; that stretch reads TPVNYIHNNSTP. The span at 265 to 285 shows a compositional bias: acidic residues; that stretch reads SDEEDSVLYSSDDSEESDYEE. The segment covering 304–475 has biased composition (low complexity); the sequence is NNNNINNNNM…NNNNNNNNNN (172 aa). Composition is skewed to polar residues over residues 476-492 and 527-540; these read ENYV…NTES and DIPN…TKQQ. Over residues 548-590 the composition is skewed to low complexity; it reads SPVYSPPNNLSPLSSPYLHHNSNNNSNNGGGNSNNNNTNFNYG. Residues 606-617 are compositionally biased toward basic and acidic residues; that stretch reads GERDPPHVINHD. Composition is skewed to low complexity over residues 635–666, 696–707, and 813–853; these read QQSQ…PSSS, SPPNTSISSLSS, and NSSN…NNNS. A compositionally biased stretch (basic and acidic residues) spans 854-863; it reads EPKKPKFPLE.

This is an uncharacterized protein from Dictyostelium discoideum (Social amoeba).